The sequence spans 369 residues: 4-hydroxy-3-methylbut-2-en-1-yl diphosphate synthase (flavodoxin) (369 aa).

[4Fe-4S] cluster contacts are provided by cysteine 270, cysteine 273, cysteine 305, and glutamate 312.

It belongs to the IspG family. [4Fe-4S] cluster serves as cofactor.

The enzyme catalyses (2E)-4-hydroxy-3-methylbut-2-enyl diphosphate + oxidized [flavodoxin] + H2O + 2 H(+) = 2-C-methyl-D-erythritol 2,4-cyclic diphosphate + reduced [flavodoxin]. Its pathway is isoprenoid biosynthesis; isopentenyl diphosphate biosynthesis via DXP pathway; isopentenyl diphosphate from 1-deoxy-D-xylulose 5-phosphate: step 5/6. Converts 2C-methyl-D-erythritol 2,4-cyclodiphosphate (ME-2,4cPP) into 1-hydroxy-2-methyl-2-(E)-butenyl 4-diphosphate. The polypeptide is 4-hydroxy-3-methylbut-2-en-1-yl diphosphate synthase (flavodoxin) (Pseudomonas putida (strain GB-1)).